Consider the following 245-residue polypeptide: Pathogenesis-related thaumatin-like protein 3.6 (245 aa).

A signal peptide spans 1-19; the sequence is GSIPFWIALIASFSVFLQG. Cystine bridges form between C33–C226, C74–C84, C89–C95, C142–C215, C148–C198, C156–C166, C170–C179, and C180–C185. N90 carries N-linked (GlcNAc...) asparagine glycosylation. Residue N186 is glycosylated (N-linked (GlcNAc...) asparagine).

This sequence belongs to the thaumatin family. In terms of tissue distribution, mostly expressed in strobili, and, to a lower extent, in roots of seedlings and saplings.

May be involved in disease resistance. This Cryptomeria japonica (Japanese cedar) protein is Pathogenesis-related thaumatin-like protein 3.6.